Consider the following 302-residue polypeptide: 4-hydroxy-tetrahydrodipicolinate synthase (302 aa).

A pyruvate-binding site is contributed by Thr-57. Residue Tyr-145 is the Proton donor/acceptor of the active site. Residue Lys-173 is the Schiff-base intermediate with substrate of the active site. Ile-213 serves as a coordination point for pyruvate.

This sequence belongs to the DapA family. Homotetramer; dimer of dimers.

It is found in the cytoplasm. It catalyses the reaction L-aspartate 4-semialdehyde + pyruvate = (2S,4S)-4-hydroxy-2,3,4,5-tetrahydrodipicolinate + H2O + H(+). The protein operates within amino-acid biosynthesis; L-lysine biosynthesis via DAP pathway; (S)-tetrahydrodipicolinate from L-aspartate: step 3/4. In terms of biological role, catalyzes the condensation of (S)-aspartate-beta-semialdehyde [(S)-ASA] and pyruvate to 4-hydroxy-tetrahydrodipicolinate (HTPA). This is 4-hydroxy-tetrahydrodipicolinate synthase from Corynebacterium aurimucosum (strain ATCC 700975 / DSM 44827 / CIP 107346 / CN-1) (Corynebacterium nigricans).